A 474-amino-acid polypeptide reads, in one-letter code: ATP synthase subunit beta (474 aa).

151–158 is an ATP binding site; sequence GGAGVGKT.

Belongs to the ATPase alpha/beta chains family. In terms of assembly, F-type ATPases have 2 components, CF(1) - the catalytic core - and CF(0) - the membrane proton channel. CF(1) has five subunits: alpha(3), beta(3), gamma(1), delta(1), epsilon(1). CF(0) has three main subunits: a(1), b(2) and c(9-12). The alpha and beta chains form an alternating ring which encloses part of the gamma chain. CF(1) is attached to CF(0) by a central stalk formed by the gamma and epsilon chains, while a peripheral stalk is formed by the delta and b chains.

The protein localises to the cell inner membrane. The enzyme catalyses ATP + H2O + 4 H(+)(in) = ADP + phosphate + 5 H(+)(out). Functionally, produces ATP from ADP in the presence of a proton gradient across the membrane. The catalytic sites are hosted primarily by the beta subunits. The sequence is that of ATP synthase subunit beta from Paracoccus denitrificans (strain Pd 1222).